Consider the following 158-residue polypeptide: UPF0311 protein CA_C3321 (158 aa).

This sequence belongs to the UPF0311 family.

In Clostridium acetobutylicum (strain ATCC 824 / DSM 792 / JCM 1419 / IAM 19013 / LMG 5710 / NBRC 13948 / NRRL B-527 / VKM B-1787 / 2291 / W), this protein is UPF0311 protein CA_C3321.